Consider the following 424-residue polypeptide: MSYIIDRRLNSKKKSTVNRQRFLRRYKQHIKKAVSDAIDKRSIQDMDRGEKIGIPSKDISEPVFHHDSGGVDTRVLPGNDQFHSGDRIQRPPSGQGGGGSGKGASDSGEGMDEFVFQITQEEFLNFMFEDLALPNLVKRQLAGIEEFEMRRAGFSNEGSPGKINVVRSLRSANSRRIALTSKKRKQLKELEARIAQLQAEPIADSATELEELEAEAAKLRAKIKRVPWLDTFDLKYNLHVKHPIPHSRAVMFCLMDVSGSMDQATKDVAKRFFLLLFLFLQRNYEKIEVVFIRHHTSAKEVNEEEFFYSRETGGTIVSSALHLMDEIIRERYPPNQWNIYGAQASDGDNWNDDSTTCYKVLTENIMPKVQYFSYIEITPRDHQALWAAYESVLRDFPKSFAMRQLEGADEIYPVFRDLFQKQVA.

The segment at 52 to 109 (IGIPSKDISEPVFHHDSGGVDTRVLPGNDQFHSGDRIQRPPSGQGGGGSGKGASDSGE) is disordered. The span at 58-69 (DISEPVFHHDSG) shows a compositional bias: basic and acidic residues.

It belongs to the UPF0229 family.

The chain is UPF0229 protein Sde_0732 from Saccharophagus degradans (strain 2-40 / ATCC 43961 / DSM 17024).